Here is a 167-residue protein sequence, read N- to C-terminus: E1B protein, small T-antigen (167 aa).

The tract at residues 143 to 167 (GLDPVQEEEEEEENLRAGLDPSTEL) is disordered.

The protein belongs to the adenoviridae E1B 19 kDa protein family.

It localises to the host cell membrane. It is found in the host nucleus envelope. The protein localises to the host nucleus lamina. Its function is as follows. Putative adenovirus Bcl-2 homolog that inhibits apoptosis induced by TNF or FAS pathways, as well as p53-mediated apoptosis. Without E1B 19K function, virus production is compromised because of premature death of host cell. Interacts with Bax protein in cell lysates. In Human adenovirus F serotype 40 (HAdV-40), this protein is E1B protein, small T-antigen.